The primary structure comprises 124 residues: MALKIRLARGGSKKRPYYQIVVADARSPRDGRFLEKIGSWNPMLSKDDEKRIELNAERVSHWIAQGAQPTDRVLRFLDQAGLAKRPARSNPTKAVPGKKAQERAAEAKQKAEDAAAAAAESAAE.

Residues 82–124 (LAKRPARSNPTKAVPGKKAQERAAEAKQKAEDAAAAAAESAAE) form a disordered region. Over residues 99 to 113 (KAQERAAEAKQKAED) the composition is skewed to basic and acidic residues. The segment covering 114 to 124 (AAAAAAESAAE) has biased composition (low complexity).

The protein belongs to the bacterial ribosomal protein bS16 family.

The sequence is that of Small ribosomal subunit protein bS16 from Sinorhizobium fredii (strain NBRC 101917 / NGR234).